The sequence spans 546 residues: Chaperonin GroEL 2 (546 aa).

Residues T30 to P33, K51, D87 to T91, G415, and D496 each bind ATP.

It belongs to the chaperonin (HSP60) family. Forms a cylinder of 14 subunits composed of two heptameric rings stacked back-to-back. Interacts with the co-chaperonin GroES.

It is found in the cytoplasm. It catalyses the reaction ATP + H2O + a folded polypeptide = ADP + phosphate + an unfolded polypeptide.. Together with its co-chaperonin GroES, plays an essential role in assisting protein folding. The GroEL-GroES system forms a nano-cage that allows encapsulation of the non-native substrate proteins and provides a physical environment optimized to promote and accelerate protein folding. This chain is Chaperonin GroEL 2, found in Bradyrhizobium sp. (strain ORS 278).